Here is a 293-residue protein sequence, read N- to C-terminus: Energy-coupling factor transporter ATP-binding protein EcfA2 (293 aa).

The ABC transporter domain occupies 3-246; that stretch reads ITFQKVEHRY…ADELEKIGVD (244 aa). 40-47 provides a ligand contact to ATP; sequence GHTGSGKS.

Belongs to the ABC transporter superfamily. Energy-coupling factor EcfA family. As to quaternary structure, forms a stable energy-coupling factor (ECF) transporter complex composed of 2 membrane-embedded substrate-binding proteins (S component), 2 ATP-binding proteins (A component) and 2 transmembrane proteins (T component).

Its subcellular location is the cell membrane. In terms of biological role, ATP-binding (A) component of a common energy-coupling factor (ECF) ABC-transporter complex. Unlike classic ABC transporters this ECF transporter provides the energy necessary to transport a number of different substrates. The protein is Energy-coupling factor transporter ATP-binding protein EcfA2 of Bacillus thuringiensis (strain Al Hakam).